The primary structure comprises 468 residues: Procollagen C-endopeptidase enhancer 1 (468 aa).

Residues 1 to 24 (MLPAALTSLLGPFLLAWVLPLARG) form the signal peptide. N-linked (GlcNAc...) asparagine glycosylation is present at Asn28. 4 cysteine pairs are disulfide-bonded: Cys36/Cys62, Cys89/Cys111, Cys158/Cys185, and Cys212/Cys235. 2 consecutive CUB domains span residues 36–148 (CGGD…YSGR) and 158–272 (CGGR…YRTL). Residue Thr41 is modified to Phosphothreonine. Phosphoserine is present on Ser49. Residues 271–341 (TLPRDAVEKE…VAPDAPSITC (71 aa)) are disordered. Over residues 272–281 (LPRDAVEKES) the composition is skewed to basic and acidic residues. Disulfide bonds link Cys341–Cys409 and Cys356–Cys460. One can recognise an NTR domain in the interval 341 to 460 (CPKQYKRSGT…ILSNLSKRKC (120 aa)). N-linked (GlcNAc...) asparagine glycosylation is present at Asn454.

As to quaternary structure, interacts with EFEMP2. In terms of tissue distribution, expressed at highest levels in collagen-rich tissues, especially tendon. Also expressed in cornea and sterna.

The protein resides in the secreted. In terms of biological role, binds to the C-terminal propeptide of type I procollagen and enhances procollagen C-proteinase activity. In Rattus norvegicus (Rat), this protein is Procollagen C-endopeptidase enhancer 1 (Pcolce).